We begin with the raw amino-acid sequence, 104 residues long: Iron-sulfur cluster assembly protein CyaY (104 aa).

This sequence belongs to the frataxin family.

Functionally, involved in iron-sulfur (Fe-S) cluster assembly. May act as a regulator of Fe-S biogenesis. This Aliivibrio salmonicida (strain LFI1238) (Vibrio salmonicida (strain LFI1238)) protein is Iron-sulfur cluster assembly protein CyaY.